We begin with the raw amino-acid sequence, 726 residues long: Elongation factor 2 (726 aa).

Residues 19-260 (DRIRNIGICA…MVIKHLPSPP (242 aa)) form the tr-type G domain. Residues 28-35 (AHIDHGKT), 94-98 (DTPGH), and 148-151 (NKVD) contribute to the GTP site. Residue His602 is modified to Diphthamide.

This sequence belongs to the TRAFAC class translation factor GTPase superfamily. Classic translation factor GTPase family. EF-G/EF-2 subfamily.

The protein resides in the cytoplasm. Functionally, catalyzes the GTP-dependent ribosomal translocation step during translation elongation. During this step, the ribosome changes from the pre-translocational (PRE) to the post-translocational (POST) state as the newly formed A-site-bound peptidyl-tRNA and P-site-bound deacylated tRNA move to the P and E sites, respectively. Catalyzes the coordinated movement of the two tRNA molecules, the mRNA and conformational changes in the ribosome. The protein is Elongation factor 2 (fusA) of Methanocaldococcus jannaschii (strain ATCC 43067 / DSM 2661 / JAL-1 / JCM 10045 / NBRC 100440) (Methanococcus jannaschii).